The chain runs to 282 residues: Elongation factor Ts (282 aa).

An involved in Mg(2+) ion dislocation from EF-Tu region spans residues 80–83; the sequence is TDFV.

It belongs to the EF-Ts family.

Its subcellular location is the cytoplasm. Associates with the EF-Tu.GDP complex and induces the exchange of GDP to GTP. It remains bound to the aminoacyl-tRNA.EF-Tu.GTP complex up to the GTP hydrolysis stage on the ribosome. This is Elongation factor Ts from Chlamydia felis (strain Fe/C-56) (Chlamydophila felis).